The following is a 682-amino-acid chain: Polyadenylate-binding protein 5 (682 aa).

RRM domains follow at residues 59-136, 146-223, 239-316, and 342-419; these read SSLY…LSNR, GNVF…HFVR, TNVY…RAQK, and SNLY…LAQR. Residues 588–665 enclose the PABC domain; sequence TISKLASDLA…ALDVLRRSAD (78 aa). At Ser600 the chain carries Phosphoserine.

Belongs to the polyadenylate-binding protein type-1 family. In terms of tissue distribution, expressed predominantly in immature flowers but also at lower levels in mature flowers and siliques. Detected in tapetum, pollen, ovules and developing seeds. Also detected in primary inflorescences and immature siliques.

The protein resides in the cytoplasm. The protein localises to the nucleus. Its function is as follows. Binds the poly(A) tail of mRNA. Appears to be an important mediator of the multiple roles of the poly(A) tail in mRNA biogenesis, stability and translation. The protein is Polyadenylate-binding protein 5 (PAB5) of Arabidopsis thaliana (Mouse-ear cress).